The following is a 160-amino-acid chain: Ribosomal RNA large subunit methyltransferase H (160 aa).

S-adenosyl-L-methionine is bound by residues Leu77, Gly109, and 128 to 133 (LSNLTF).

The protein belongs to the RNA methyltransferase RlmH family. As to quaternary structure, homodimer.

It is found in the cytoplasm. The catalysed reaction is pseudouridine(1915) in 23S rRNA + S-adenosyl-L-methionine = N(3)-methylpseudouridine(1915) in 23S rRNA + S-adenosyl-L-homocysteine + H(+). Specifically methylates the pseudouridine at position 1915 (m3Psi1915) in 23S rRNA. The sequence is that of Ribosomal RNA large subunit methyltransferase H from Desulforamulus reducens (strain ATCC BAA-1160 / DSM 100696 / MI-1) (Desulfotomaculum reducens).